The sequence spans 641 residues: UPF0329 protein ECU11_0030 (641 aa).

Positions 358 to 387 (RQRKREEETERSVKELVGDEEKAKSKEEKA) are enriched in basic and acidic residues. The segment at 358–444 (RQRKREEETE…KGGKKKSKGG (87 aa)) is disordered. A compositionally biased stretch (basic residues) spans 435–444 (KGGKKKSKGG).

The protein belongs to the UPF0329 family.

The polypeptide is UPF0329 protein ECU11_0030 (Encephalitozoon cuniculi (strain GB-M1) (Microsporidian parasite)).